The following is a 185-amino-acid chain: CASP-like protein 5A1 (185 aa).

Topologically, residues 1 to 48 (MNVSHPAVHPVGVPPALGGQAVPPRMRMRVRMEYLVFQGMPLPGSLGG) are cytoplasmic. The helical transmembrane segment at 49–69 (LMLRLGQFCSALIAFSVMVSI) threads the bilayer. The Extracellular portion of the chain corresponds to 70–76 (RDFSVTA). The chain crosses the membrane as a helical span at residues 77 to 97 (FCYLLAATVLQCLWSLALAVI). The Cytoplasmic portion of the chain corresponds to 98 to 121 (DVYALLVKRSLRNPLLVSIFVVGD). Residues 122 to 142 (GVTATLTFAAACASAGVVVLI) traverse the membrane as a helical segment. Residues 143–160 (GNDISMCKSNPCANYEAA) lie on the Extracellular side of the membrane. Residues 161-181 (IIMAFLSWFMVSISFVLTFWM) traverse the membrane as a helical segment. Topologically, residues 182–185 (LATL) are cytoplasmic.

The protein belongs to the Casparian strip membrane proteins (CASP) family. As to quaternary structure, homodimer and heterodimers.

The protein localises to the cell membrane. The sequence is that of CASP-like protein 5A1 from Pinus contorta (Shore pine).